A 1007-amino-acid polypeptide reads, in one-letter code: Protein vav-1 (1007 aa).

Residues 37–151 enclose the Calponin-homology (CH) domain; that stretch reads CDLWIGCARW…TLSFLSHTKE (115 aa). Residues 151 to 239 form an AC region; sequence ESLSRGVDPF…ENDLQNTPTL (89 aa). The disordered stretch occupies residues 153–176; it reads LSRGVDPFPDTDNNQEGTSNGSEF. Polar residues predominate over residues 163-174; that stretch reads TDNNQEGTSNGS. Phosphotyrosine is present on residues Tyr183, Tyr200, and Tyr217. Residues 240–437 enclose the DH domain; sequence KRNRCIRELY…EDVCNYINEE (198 aa). The PH domain occupies 470–598; sequence RVNLDGEVKM…WMTALLLSKS (129 aa). The segment at 610–664 adopts a Phorbol-ester/DAG-type zinc-finger fold; that stretch reads NHKVAFHSFRVDVKNPATCDVCDKLMKGLQYQGYKCESCNMSMHKECLGLKKCEA. The SH3 1 domain maps to 688–750; sequence HEGDIVVANS…HLDHVSQSRT (63 aa). Residues 778–817 form a disordered region; the sequence is LPNKLLSDGSSRSLSGPHGSRSSRNSSSSTINGSMDSVPR. Residues 782–814 show a composition bias toward low complexity; that stretch reads LLSDGSSRSLSGPHGSRSSRNSSSSTINGSMDS. The 95-residue stretch at 831–925 folds into the SH2 domain; the sequence is WYMGEMERAK…ALDTCLKNPY (95 aa). One can recognise an SH3 2 domain in the interval 926-991; that stretch reads SQCKVFKAVH…PLSYVKPYDP (66 aa).

Post-translationally, GEF activity is regulated by phosphorylation on tyrosine residues. Strong expression in the pharynx, proximal gonad, spermatheca, intestine and rectal epithelia.

In terms of biological role, acts as a guanine nucleotide exchange factor (GEF) for Rho GTPase. Has a critical roles in the generation of rhythmic behaviors: feeding, defecation and ovulation by dynamically regulating the concentration of intracellular calcium. Plays a role in male tail tip morphogenesis. The chain is Protein vav-1 from Caenorhabditis elegans.